A 417-amino-acid polypeptide reads, in one-letter code: uncharacterized protein (417 aa).

2 disordered regions span residues 44–83 (FTNE…VRSR) and 325–346 (VQSA…PPKE). Residues 54-64 (SNYSTSGYDSS) show a composition bias toward low complexity. The span at 65–76 (AETISANSSPIN) shows a compositional bias: polar residues. Positions 326-339 (QSARKNQKKGRKNR) are enriched in basic residues. A helical transmembrane segment spans residues 362 to 382 (FLIIGVYVLVFIYVCTNVLTV).

Its subcellular location is the membrane. This is an uncharacterized protein from Caenorhabditis elegans.